The primary structure comprises 139 residues: Small ribosomal subunit protein uS12 (139 aa).

The disordered stretch occupies residues 12 to 55; it reads RVDKVKKSDSPALNKGYNSFKKSQTDVSSPQKRGVCTRVGTMTP. Residues 27–42 show a composition bias toward polar residues; the sequence is GYNSFKKSQTDVSSPQ. Residue D102 is modified to 3-methylthioaspartic acid. Residues 119–139 form a disordered region; it reads GVQNRMQGRSKYGTKKPKDKK. Over residues 130–139 the composition is skewed to basic residues; that stretch reads YGTKKPKDKK.

The protein belongs to the universal ribosomal protein uS12 family. Part of the 30S ribosomal subunit. Contacts proteins S8 and S17. May interact with IF1 in the 30S initiation complex.

Functionally, with S4 and S5 plays an important role in translational accuracy. Interacts with and stabilizes bases of the 16S rRNA that are involved in tRNA selection in the A site and with the mRNA backbone. Located at the interface of the 30S and 50S subunits, it traverses the body of the 30S subunit contacting proteins on the other side and probably holding the rRNA structure together. The combined cluster of proteins S8, S12 and S17 appears to hold together the shoulder and platform of the 30S subunit. The protein is Small ribosomal subunit protein uS12 of Shouchella clausii (strain KSM-K16) (Alkalihalobacillus clausii).